A 408-amino-acid polypeptide reads, in one-letter code: LL-diaminopimelate aminotransferase (408 aa).

Residues Y15 and G42 each contribute to the substrate site. Pyridoxal 5'-phosphate is bound by residues Y72, 108-109 (SK), Y132, N187, Y218, and 246-248 (SFS). Substrate contacts are provided by K109, Y132, and N187. An N6-(pyridoxal phosphate)lysine modification is found at K249. R257 and N292 together coordinate pyridoxal 5'-phosphate. Positions 292 and 388 each coordinate substrate.

Belongs to the class-I pyridoxal-phosphate-dependent aminotransferase family. LL-diaminopimelate aminotransferase subfamily. In terms of assembly, homodimer. Pyridoxal 5'-phosphate serves as cofactor.

It carries out the reaction (2S,6S)-2,6-diaminopimelate + 2-oxoglutarate = (S)-2,3,4,5-tetrahydrodipicolinate + L-glutamate + H2O + H(+). It functions in the pathway amino-acid biosynthesis; L-lysine biosynthesis via DAP pathway; LL-2,6-diaminopimelate from (S)-tetrahydrodipicolinate (aminotransferase route): step 1/1. Its function is as follows. Involved in the synthesis of meso-diaminopimelate (m-DAP or DL-DAP), required for both lysine and peptidoglycan biosynthesis. Catalyzes the direct conversion of tetrahydrodipicolinate to LL-diaminopimelate. This Prochlorococcus marinus (strain MIT 9211) protein is LL-diaminopimelate aminotransferase.